A 387-amino-acid chain; its full sequence is GTP-binding protein 10 (387 aa).

In terms of domain architecture, Obg spans Gly-13 to Ile-148. Residues Ala-149–Asp-344 enclose the OBG-type G domain. Residues Gly-155–Ser-162, Asp-202–Leu-206, and Asn-278–Asp-281 each bind GTP.

Belongs to the TRAFAC class OBG-HflX-like GTPase superfamily. OBG GTPase family.

It localises to the nucleus. The protein localises to the nucleolus. Its function is as follows. May be involved in the ribosome maturation process. In Bos taurus (Bovine), this protein is GTP-binding protein 10 (GTPBP10).